Reading from the N-terminus, the 516-residue chain is uncharacterized protein (516 aa).

The signal sequence occupies residues 1–17 (MSVWVALALLGMCVSCT). Disordered regions lie at residues 29 to 197 (KEPP…EVPR) and 296 to 426 (RTVS…RDHL). Positions 71–85 (RVPESSQEREQKPES) are enriched in basic and acidic residues. A compositionally biased stretch (pro residues) spans 122–144 (VAPPAPPAPTAPRPHRPSPPPVS). Residues 145-155 (PSASKPKQRAV) are compositionally biased toward low complexity. Basic and acidic residues predominate over residues 351–367 (KAQHGTPRPDEKKDREP). Positions 394-406 (SPASQPSAPSAAP) are enriched in low complexity. Residues 415–426 (AHKEGQEKRDHL) show a composition bias toward basic and acidic residues.

This is an uncharacterized protein from Treponema pallidum (strain Nichols).